Here is a 530-residue protein sequence, read N- to C-terminus: Na(+)/H(+) antiporter NhaB (530 aa).

10 helical membrane passes run 13-33, 67-87, 90-110, 138-158, 205-225, 245-265, 302-333, 350-370, 449-469, and 477-497; these read FLGQ…LINP, PGGL…ETVL, VVGN…IYFL, AAAL…VIAV, LLMH…VGEP, MAPI…FLEF, LVIQ…VIIL, FEEA…VAVI, VATP…LAPL, and MVIM…VMTA.

This sequence belongs to the NhaB Na(+)/H(+) (TC 2.A.34) antiporter family.

The protein resides in the cell inner membrane. The catalysed reaction is 2 Na(+)(in) + 3 H(+)(out) = 2 Na(+)(out) + 3 H(+)(in). Its function is as follows. Na(+)/H(+) antiporter that extrudes sodium in exchange for external protons. This is Na(+)/H(+) antiporter NhaB from Alcanivorax borkumensis (strain ATCC 700651 / DSM 11573 / NCIMB 13689 / SK2).